Here is a 2327-residue protein sequence, read N- to C-terminus: Chondroitin sulfate proteoglycan 4 (2327 aa).

Residues 1-29 (MLLGPGHPLSAPALALALTLALLVRSTAP) form the signal peptide. Laminin G-like domains follow at residues 30 to 193 (ASFF…HEGC) and 203 to 381 (VGLG…SAGC). The tract at residues 30-640 (ASFFGENHLE…HRGGPAQDLT (611 aa)) is globular or compact configuration stabilized by disulfide bonds. The tract at residues 30 to 640 (ASFFGENHLE…HRGGPAQDLT (611 aa)) is neurite growth inhibition. Residues 30–2229 (ASFFGENHLE…LGFLEANMFS (2200 aa)) lie on the Extracellular side of the membrane. N-linked (GlcNAc...) asparagine glycosylation occurs at Asn-130. A disulfide bond links Cys-170 and Cys-193. A glycan (N-linked (GlcNAc...) asparagine) is linked at Asn-349. A disulfide bridge links Cys-355 with Cys-381. N-linked (GlcNAc...) asparagine glycosylation occurs at Asn-428. CSPG repeat units follow at residues 429–524 (FTQL…LEVS), 554–646 (PRII…VSDG), and 663–765 (AIQI…LEVQ). An interaction with COL6A2 region spans residues 575 to 1045 (GPEIFQAYDP…RGGQRLLTTD (471 aa)). An interaction with COL5A1 region spans residues 632 to 1451 (RGGPAQDLTF…SETQTDAFVL (820 aa)). N-linked (GlcNAc...) asparagine glycans are attached at residues Asn-686 and Asn-773. CSPG repeat units follow at residues 784–883 (TVWM…FRVT) and 903–994 (NAPV…FVAT). The O-linked (Xyl...) (chondroitin sulfate) serine glycan is linked to Ser-1000. 9 CSPG repeats span residues 1023–1115 (APVQ…VSDG), 1131–1221 (YLHV…FSVA), 1243–1342 (PLQL…LDVA), 1361–1454 (TVIP…LLAN), 1478–1568 (PPVL…LSDG), 1586–1684 (LLSL…LLLS), 1709–1808 (PSRL…FRAH), 1837–1929 (PPQP…MSDG), and 1946–2034 (TIEV…VVAL). 2 N-linked (GlcNAc...) asparagine glycosylation sites follow: Asn-1136 and Asn-1207. N-linked (GlcNAc...) asparagine glycosylation is found at Asn-1369 and Asn-1454. Positions 1591 to 2226 (GTRKLTVCPE…GGFLGFLEAN (636 aa)) are neurite growth inhibition. The segment at 1592–2226 (TRKLTVCPES…GGFLGFLEAN (635 aa)) is cysteine-containing. The N-linked (GlcNAc...) asparagine glycan is linked to Asn-1650. Asn-1914, Asn-2021, Asn-2039, Asn-2045, and Asn-2080 each carry an N-linked (GlcNAc...) asparagine glycan. The CSPG 15 repeat unit spans residues 2043–2152 (TVNVTVQALL…AGDRLTLELW (110 aa)). The disordered stretch occupies residues 2190–2210 (ETEKPGRSVPTGQPGQAASSP). The segment covering 2199–2210 (PTGQPGQAASSP) has biased composition (polar residues). Residues 2230-2250 (IIIPVCLILLLLALILPLLFY) form a helical membrane-spanning segment. The Cytoplasmic segment spans residues 2251-2327 (LRKRNKTGKH…PALRNGQYWV (77 aa)). Thr-2257 carries the post-translational modification Phosphothreonine; by PKC/PRKCA. The PDZ-binding motif lies at 2325–2327 (YWV).

In terms of assembly, interacts with ITGA4 through its chondroitin sulfate glycosaminoglycan. Interacts with BCAR1, CDC42 and ACK1. Interacts with MMP16. Interacts with the first PDZ domain of MPDZ. Interacts with PRKCA. Interacts with LGALS3 and the integrin composed of ITGB1 and ITGA3. Binds TNC, laminin-1, COL5A1 and COL6A2. Interacts with PLG and angiostatin. Binds FGF2 and PDGFA. Interacts with GRIP1, GRIP2 and GRIA2. Forms a ternary complex with GRIP1 and GRIA2. O-glycosylated; contains glycosaminoglycan chondroitin sulfate which are required for proper localization and function in stress fiber formation. Involved in interaction with MMP16 and ITGA4. In terms of processing, phosphorylation by PRKCA regulates its subcellular location and function in cell motility. As to expression, expressed in microcascular pericytes and not endothelial cells.

It localises to the cell membrane. The protein resides in the apical cell membrane. It is found in the cell projection. The protein localises to the lamellipodium membrane. Its subcellular location is the cell surface. Proteoglycan playing a role in cell proliferation and migration which stimulates endothelial cells motility during microvascular morphogenesis. May also inhibit neurite outgrowth and growth cone collapse during axon regeneration. Cell surface receptor for collagen alpha 2(VI) which may confer cells ability to migrate on that substrate. Binds through its extracellular N-terminus growth factors, extracellular matrix proteases modulating their activity. May regulate MPP16-dependent degradation and invasion of type I collagen participating in melanoma cells invasion properties. May modulate the plasminogen system by enhancing plasminogen activation and inhibiting angiostatin. Also functions as a signal transducing protein by binding through its cytoplasmic C-terminus scaffolding and signaling proteins. May promote retraction fiber formation and cell polarization through Rho GTPase activation. May stimulate alpha-4, beta-1 integrin-mediated adhesion and spreading by recruiting and activating a signaling cascade through CDC42, ACK1 and BCAR1. May activate FAK and ERK1/ERK2 signaling cascades. The protein is Chondroitin sulfate proteoglycan 4 (Cspg4) of Mus musculus (Mouse).